Reading from the N-terminus, the 322-residue chain is Tetrahydromethanopterin S-methyltransferase subunit H (322 aa).

Belongs to the MtrH family. As to quaternary structure, the complex is composed of 8 subunits; MtrA, MtrB, MtrC, MtrD, MtrE, MtrF, MtrG and MtrH.

The catalysed reaction is 5-methyl-5,6,7,8-tetrahydromethanopterin + coenzyme M + 2 Na(+)(in) = 5,6,7,8-tetrahydromethanopterin + methyl-coenzyme M + 2 Na(+)(out). It participates in one-carbon metabolism; methanogenesis from CO(2); methyl-coenzyme M from 5,10-methylene-5,6,7,8-tetrahydromethanopterin: step 2/2. In terms of biological role, part of a complex that catalyzes the formation of methyl-coenzyme M and tetrahydromethanopterin from coenzyme M and methyl-tetrahydromethanopterin. This is an energy-conserving, sodium-ion translocating step. MtrH catalyzes the transfer of the methyl group from methyl-tetrahydromethanopterin to the corrinoid prosthetic group of MtrA. The polypeptide is Tetrahydromethanopterin S-methyltransferase subunit H (Methanopyrus kandleri (strain AV19 / DSM 6324 / JCM 9639 / NBRC 100938)).